The sequence spans 196 residues: uncharacterized protein (196 aa).

Positions 12-66 (LRAAREAQKMSQRELSARSGLTQSHISQIERGTMEPGLGSLVDVARALDLEIVLA) constitute an HTH cro/C1-type domain. The segment at residues 23–42 (QRELSARSGLTQSHISQIER) is a DNA-binding region (H-T-H motif). The segment at 174 to 196 (VHRDRDDAVPRSAYALDEEDDNA) is disordered.

This is an uncharacterized protein from Sinorhizobium fredii (strain NBRC 101917 / NGR234).